Consider the following 370-residue polypeptide: Aminomethyltransferase (370 aa).

The protein belongs to the GcvT family. As to quaternary structure, the glycine cleavage system is composed of four proteins: P, T, L and H.

It carries out the reaction N(6)-[(R)-S(8)-aminomethyldihydrolipoyl]-L-lysyl-[protein] + (6S)-5,6,7,8-tetrahydrofolate = N(6)-[(R)-dihydrolipoyl]-L-lysyl-[protein] + (6R)-5,10-methylene-5,6,7,8-tetrahydrofolate + NH4(+). In terms of biological role, the glycine cleavage system catalyzes the degradation of glycine. This is Aminomethyltransferase from Prochlorococcus marinus (strain MIT 9301).